The sequence spans 558 residues: Glutamine--tRNA ligase (558 aa).

A 'HIGH' region motif is present at residues 36–46; it reads PEPNGYLHLGH. Residues 37–39 and 43–49 each bind ATP; these read EPN and HLGHAKS. Residues Asp69 and Tyr214 each coordinate L-glutamine. ATP contacts are provided by residues Thr233, 263-264, and 271-273; these read RL and LSK. Residues 270–274 carry the 'KMSKS' region motif; that stretch reads LLSKR.

The protein belongs to the class-I aminoacyl-tRNA synthetase family. In terms of assembly, monomer.

The protein localises to the cytoplasm. The catalysed reaction is tRNA(Gln) + L-glutamine + ATP = L-glutaminyl-tRNA(Gln) + AMP + diphosphate. The sequence is that of Glutamine--tRNA ligase from Nitrobacter hamburgensis (strain DSM 10229 / NCIMB 13809 / X14).